Consider the following 217-residue polypeptide: Octanoyltransferase (217 aa).

In terms of domain architecture, BPL/LPL catalytic spans 34-216 (SETRDELWLL…AASRASRHDR (183 aa)). Residues 73 to 80 (RGGQVTWH), 140 to 142 (ALG), and 153 to 155 (GLS) contribute to the substrate site. The active-site Acyl-thioester intermediate is the Cys-171.

Belongs to the LipB family.

The protein localises to the cytoplasm. It carries out the reaction octanoyl-[ACP] + L-lysyl-[protein] = N(6)-octanoyl-L-lysyl-[protein] + holo-[ACP] + H(+). It participates in protein modification; protein lipoylation via endogenous pathway; protein N(6)-(lipoyl)lysine from octanoyl-[acyl-carrier-protein]: step 1/2. Its function is as follows. Catalyzes the transfer of endogenously produced octanoic acid from octanoyl-acyl-carrier-protein onto the lipoyl domains of lipoate-dependent enzymes. Lipoyl-ACP can also act as a substrate although octanoyl-ACP is likely to be the physiological substrate. The protein is Octanoyltransferase of Halorhodospira halophila (strain DSM 244 / SL1) (Ectothiorhodospira halophila (strain DSM 244 / SL1)).